The sequence spans 831 residues: Periplasmic nitrate reductase (831 aa).

The segment at residues 1–35 (MTISDSRRTFLKASAAAATASAAGIPLANGTAAEA) is a signal peptide (tat-type signal). The 4Fe-4S Mo/W bis-MGD-type domain maps to 42–98 (IRWDKAACRFCGTGCSVLVGTKEGRVVATQGDPDAPVNRGLNCIKGYFLSKIMYGED). [4Fe-4S] cluster is bound by residues C49, C52, C56, and C84. Mo-bis(molybdopterin guanine dinucleotide) contacts are provided by residues K86, Q153, N178, C182, 215–222 (WGSNMAEM), 246–250 (STYEH), 265–267 (QTD), M375, Q379, N485, 511–512 (SD), K534, D561, and 721–730 (TGRVLEHWHS). W797 lines the substrate pocket. The Mo-bis(molybdopterin guanine dinucleotide) site is built by N805 and K822.

Belongs to the prokaryotic molybdopterin-containing oxidoreductase family. NasA/NapA/NarB subfamily. As to quaternary structure, component of the periplasmic nitrate reductase NapAB complex composed of NapA and NapB. The cofactor is [4Fe-4S] cluster. Requires Mo-bis(molybdopterin guanine dinucleotide) as cofactor. Predicted to be exported by the Tat system. The position of the signal peptide cleavage has not been experimentally proven.

It is found in the periplasm. It catalyses the reaction 2 Fe(II)-[cytochrome] + nitrate + 2 H(+) = 2 Fe(III)-[cytochrome] + nitrite + H2O. In terms of biological role, catalytic subunit of the periplasmic nitrate reductase complex NapAB. Receives electrons from NapB and catalyzes the reduction of nitrate to nitrite. This chain is Periplasmic nitrate reductase, found in Dinoroseobacter shibae (strain DSM 16493 / NCIMB 14021 / DFL 12).